A 1215-amino-acid polypeptide reads, in one-letter code: RNA-dependent RNA polymerase 1 (1215 aa).

Belongs to the RdRP family. As to quaternary structure, cid12, hrr1 and rdp1 interact forming the RNA-directed RNA polymerase complex (RDRC). The RDRC complex interacts with the RITS complex via interaction between ago1 and hrr1. Clr4 has a role in mediating this interaction.

It localises to the cytoplasm. It is found in the nucleus. The protein resides in the chromosome. Its subcellular location is the telomere. The protein localises to the centromere. It carries out the reaction RNA(n) + a ribonucleoside 5'-triphosphate = RNA(n+1) + diphosphate. In terms of biological role, has a role in the RNA interference (RNAi) pathway which is important for heterochromatin formation, accurate chromosome segregation, centromere cohesion and telomere function during mitosis and meiosis. Required for both post-transcriptional and transcriptional gene silencing. Required for silencing at the centromeres and for initiation of transcriptionally silent heterochromatin at the mating type locus. Promotes histone H3 'Lys-10' methylation necessary for centromere function. Required for recruitment of swi6 and cohesin to an ectopic dg repeat. A member of the RNA-directed RNA polymerase complex (RDRC) which is involved in the generation of small interfering RNAs (siRNAs) and mediates their association with the RNA-induced transcriptional silencing (RITS) complex. RITS acts as a priming complex for dsRNA synthesis at the site of non-coding centromeric RNA. Its RNA-dependent RNA polymerase activity is critical in siRNA production necessary for heterochromatin formation. In Schizosaccharomyces pombe (strain 972 / ATCC 24843) (Fission yeast), this protein is RNA-dependent RNA polymerase 1 (rdp1).